Consider the following 406-residue polypeptide: Inactive serine protease 35 (406 aa).

A signal peptide spans Met-1–Gly-17. The N-linked (GlcNAc...) asparagine glycan is linked to Asn-87. Residues Val-121–Ala-401 enclose the Peptidase S1 domain. Cys-151 and Cys-167 are oxidised to a cystine. The span at Leu-186–Arg-204 shows a compositional bias: basic residues. Residues Leu-186 to Lys-248 form a disordered region.

Belongs to the peptidase S1 family.

It is found in the secreted. In Rattus norvegicus (Rat), this protein is Inactive serine protease 35 (Prss35).